We begin with the raw amino-acid sequence, 88 residues long: Co-chaperonin GroES (88 aa).

The protein belongs to the GroES chaperonin family. In terms of assembly, heptamer of 7 subunits arranged in a ring. Interacts with the chaperonin GroEL.

The protein localises to the cytoplasm. In terms of biological role, together with the chaperonin GroEL, plays an essential role in assisting protein folding. The GroEL-GroES system forms a nano-cage that allows encapsulation of the non-native substrate proteins and provides a physical environment optimized to promote and accelerate protein folding. GroES binds to the apical surface of the GroEL ring, thereby capping the opening of the GroEL channel. This chain is Co-chaperonin GroES, found in Treponema pallidum (strain Nichols).